The primary structure comprises 222 residues: Octanoyltransferase (222 aa).

A BPL/LPL catalytic domain is found at 35–214; sequence GTAPELIWLL…HLDGFLARLD (180 aa). Substrate-binding positions include 73-80, 145-147, and 158-160; these read RGGRYTYH, AIG, and GFS. Catalysis depends on cysteine 176, which acts as the Acyl-thioester intermediate.

It belongs to the LipB family.

The protein resides in the cytoplasm. The catalysed reaction is octanoyl-[ACP] + L-lysyl-[protein] = N(6)-octanoyl-L-lysyl-[protein] + holo-[ACP] + H(+). The protein operates within protein modification; protein lipoylation via endogenous pathway; protein N(6)-(lipoyl)lysine from octanoyl-[acyl-carrier-protein]: step 1/2. In terms of biological role, catalyzes the transfer of endogenously produced octanoic acid from octanoyl-acyl-carrier-protein onto the lipoyl domains of lipoate-dependent enzymes. Lipoyl-ACP can also act as a substrate although octanoyl-ACP is likely to be the physiological substrate. In Novosphingobium aromaticivorans (strain ATCC 700278 / DSM 12444 / CCUG 56034 / CIP 105152 / NBRC 16084 / F199), this protein is Octanoyltransferase.